Reading from the N-terminus, the 70-residue chain is Virion membrane protein OPG139 (70 aa).

A helical membrane pass occupies residues 1–21 (MIGILLLIGICVAVTVAILYS). Topologically, residues 22 to 70 (MYNKIKNSQNPNPSPNLNSPPPEPKNTKFVNNLEKDHISSLYNLVKSSV) are virion surface. Residues 30-50 (QNPNPSPNLNSPPPEPKNTKF) form a disordered region. A compositionally biased stretch (pro residues) spans 33-45 (NPSPNLNSPPPEP). Serine 40 carries the post-translational modification Phosphoserine; by host.

It belongs to the orthopoxvirus OPG139 family. Phosphorylated by a OPG054-independent mechanism.

The protein localises to the virion membrane. Functionally, essential for the encapsidation of DNA into immature virions (IV) and the subsequent maturation of IV into mature virions (MV). The polypeptide is Virion membrane protein OPG139 (OPG139) (Homo sapiens (Human)).